The primary structure comprises 475 residues: F-box protein At3g59150 (475 aa).

The region spanning 12 to 58 is the F-box domain; it reads GDVISNLPNDLLCRILSYLSTKEAALTSILSKRWSNLLLSIPILDFD.

This Arabidopsis thaliana (Mouse-ear cress) protein is F-box protein At3g59150.